The chain runs to 4241 residues: Intermembrane lipid transfer protein vps13E (4241 aa).

A Chorein N-terminal domain is found at 5 to 97; the sequence is ILPGLLKKIL…GPKDIINTFS (93 aa). The span at 120-140 shows a compositional bias: low complexity; the sequence is IDSNSNNNNKKNAPSSSSSND. Disordered regions lie at residues 120–143, 234–340, 942–986, 1220–1256, 1345–1369, 1534–1571, 2148–2192, and 2217–2282; these read IDSNSNNNNKKNAPSSSSSNDDFF, LSKN…QQQQ, LGTG…VEKE, NNNNNNNNNNNNNNNNNNNNNRNLNNNNNNNNNNQKP, TTTTTSPRYHHQNHHNHQHKKQNRH, KPSSKDNNNNNNNNNNSDSDSDSDTDSSSSSENNYNNN, QQQQ…PNVH, and VTEK…NNIN. Over residues 234–254 the composition is skewed to polar residues; that stretch reads LSKNTSTHQQQQPTFNPYVGS. Low complexity predominate over residues 255 to 264; that stretch reads QQQQQQQPQQ. A compositionally biased stretch (polar residues) spans 279 to 289; that stretch reads FMNNKNSDEGI. Composition is skewed to low complexity over residues 290–313, 325–340, and 942–952; these read SSSSSSSSFNNNNLNIPTLNLNDN, QPTPKSEQYQQQQQQQ, and LGTGNGINNNN. Residues 968 to 986 are compositionally biased toward basic and acidic residues; that stretch reads DDGKYPEQDDLDDSKVEKE. A compositionally biased stretch (low complexity) spans 1220–1253; it reads NNNNNNNNNNNNNNNNNNNNNRNLNNNNNNNNNN. Positions 1352–1369 are enriched in basic residues; the sequence is RYHHQNHHNHQHKKQNRH. Composition is skewed to low complexity over residues 1538–1551, 1559–1571, and 2148–2177; these read KDNNNNNNNNNNSD, DSSSSSENNYNNN, and QQQQQQQQQNNNNNQNNQASSNNNNNNNNN. A compositionally biased stretch (polar residues) spans 2178–2188; sequence VSGNTINNKSV. Acidic residues predominate over residues 2246–2259; the sequence is SDDDDDEGEDEDIG. The span at 2265-2282 shows a compositional bias: polar residues; it reads DHSTSSAPTSRSNYNNIN. The SHR-BD domain occupies 2825 to 3134; that stretch reads KIVFYNQYWI…IPYVWDLPLE (310 aa). 3 disordered regions span residues 3973-4000, 4059-4094, and 4109-4140; these read PTTTTTTNTTTTPYQSSQNIHSTPYPTE, YQHSGSGAPPPPPIITTTTNSTIPPPSSNINQRQLQ, and KSMARQQQFQQPPPPPPLPSNNRLSLTPSGSG. Low complexity predominate over residues 3974 to 3984; sequence TTTTTTNTTTT. The span at 3985–4000 shows a compositional bias: polar residues; the sequence is PYQSSQNIHSTPYPTE. Positions 4128-4140 are enriched in polar residues; it reads SNNRLSLTPSGSG.

Belongs to the VPS13 family.

The protein resides in the membrane. Functionally, mediates the transfer of lipids between membranes at organelle contact sites. This chain is Intermembrane lipid transfer protein vps13E (vps13E), found in Dictyostelium discoideum (Social amoeba).